The sequence spans 729 residues: 1,4-alpha-glucan branching enzyme GlgB (729 aa).

The active-site Nucleophile is D405. E458 functions as the Proton donor in the catalytic mechanism.

It belongs to the glycosyl hydrolase 13 family. GlgB subfamily. Monomer.

The enzyme catalyses Transfers a segment of a (1-&gt;4)-alpha-D-glucan chain to a primary hydroxy group in a similar glucan chain.. It functions in the pathway glycan biosynthesis; glycogen biosynthesis. Catalyzes the formation of the alpha-1,6-glucosidic linkages in glycogen by scission of a 1,4-alpha-linked oligosaccharide from growing alpha-1,4-glucan chains and the subsequent attachment of the oligosaccharide to the alpha-1,6 position. The chain is 1,4-alpha-glucan branching enzyme GlgB from Mannheimia succiniciproducens (strain KCTC 0769BP / MBEL55E).